The primary structure comprises 176 residues: Probable inosine/xanthosine triphosphatase (176 aa).

Aspartate 36 is a binding site for Mg(2+).

Belongs to the YjjX NTPase family. Homodimer. Mg(2+) is required as a cofactor. The cofactor is Mn(2+).

It catalyses the reaction XTP + H2O = XDP + phosphate + H(+). The enzyme catalyses ITP + H2O = IDP + phosphate + H(+). Phosphatase that hydrolyzes non-canonical purine nucleotides such as XTP and ITP to their respective diphosphate derivatives. Probably excludes non-canonical purines from DNA/RNA precursor pool, thus preventing their incorporation into DNA/RNA and avoiding chromosomal lesions. The chain is Probable inosine/xanthosine triphosphatase from Saccharolobus islandicus (strain M.16.4 / Kamchatka #3) (Sulfolobus islandicus).